We begin with the raw amino-acid sequence, 451 residues long: Tubulin alpha-1 chain (451 aa).

Residue Q11 participates in GTP binding. K40 is modified (N6-acetyllysine). GTP is bound by residues E71, G144, T145, T179, N206, and N228. E71 contributes to the Mg(2+) binding site. E254 is an active-site residue.

Belongs to the tubulin family. As to quaternary structure, dimer of alpha and beta chains. A typical microtubule is a hollow water-filled tube with an outer diameter of 25 nm and an inner diameter of 15 nM. Alpha-beta heterodimers associate head-to-tail to form protofilaments running lengthwise along the microtubule wall with the beta-tubulin subunit facing the microtubule plus end conferring a structural polarity. Microtubules usually have 13 protofilaments but different protofilament numbers can be found in some organisms and specialized cells. Mg(2+) serves as cofactor. Post-translationally, undergoes a tyrosination/detyrosination cycle, the cyclic removal and re-addition of a C-terminal tyrosine residue by the enzymes tubulin tyrosine carboxypeptidase (TTCP) and tubulin tyrosine ligase (TTL), respectively. In terms of processing, acetylation of alpha chains at Lys-40 stabilizes microtubules and affects affinity and processivity of microtubule motors. This modification has a role in multiple cellular functions, ranging from cell motility, cell cycle progression or cell differentiation to intracellular trafficking and signaling.

The protein localises to the cytoplasm. It is found in the cytoskeleton. The enzyme catalyses GTP + H2O = GDP + phosphate + H(+). Functionally, tubulin is the major constituent of microtubules, a cylinder consisting of laterally associated linear protofilaments composed of alpha- and beta-tubulin heterodimers. Microtubules grow by the addition of GTP-tubulin dimers to the microtubule end, where a stabilizing cap forms. Below the cap, tubulin dimers are in GDP-bound state, owing to GTPase activity of alpha-tubulin. In Chlamydomonas reinhardtii (Chlamydomonas smithii), this protein is Tubulin alpha-1 chain (TUBA1).